The sequence spans 173 residues: Alpha-crystallin A chain (173 aa).

Methionine 1 is modified (N-acetylmethionine). One can recognise a sHSP domain in the interval 52 to 164 (LFRSVLESGI…SDRPIPVARE (113 aa)). Residues histidine 100, glutamate 102, histidine 107, and histidine 154 each coordinate Zn(2+). Residues 152–173 (TIHSDRPIPVAREEKPTSAPSS) form a disordered region. Over residues 153 to 167 (IHSDRPIPVAREEKP) the composition is skewed to basic and acidic residues.

This sequence belongs to the small heat shock protein (HSP20) family. In terms of assembly, heteropolymer composed of three CRYAA and one CRYAB subunits. Inter-subunit bridging via zinc ions enhances stability, which is crucial as there is no protein turn over in the lens. Can also form homodimers and homotetramers (dimers of dimers) which serve as the building blocks of homooligomers. Within homooligomers, the zinc-binding motif is created from residues of 3 different molecules. His-100 and Glu-102 from one molecule are ligands of the zinc ion, and His-107 and His-154 residues from additional molecules complete the site with tetrahedral coordination geometry.

Its subcellular location is the cytoplasm. It is found in the nucleus. Functionally, contributes to the transparency and refractive index of the lens. May act as a chaperone, preventing aggregation of various proteins under a wide range of stress conditions. This chain is Alpha-crystallin A chain (CRYAA), found in Alligator mississippiensis (American alligator).